A 190-amino-acid chain; its full sequence is Ribosome hibernation promotion factor (190 aa).

The segment at 101 to 190 (RDRGDQEVFV…KYGLIQTSEQ (90 aa)) is required for ribosome-binding.

The protein belongs to the HPF/YfiA ribosome-associated protein family. Long HPF subfamily. In terms of assembly, interacts with 100S ribosomes during exponential growth, as 100S ribosomes decrease (after 28 hours) also found associated with 30s and 50S subunits.

Its subcellular location is the cytoplasm. Its function is as follows. Required and sufficient for dimerization of active 70S ribosomes into 100S ribosomes. 110S ribosomes are probably translationally inactive and may serve as a reservoir of easily reactivated ribosomes when necessary in the cell. Also reduces the translation efficiency of a small number of genes. Unlike E.coli, 100S ribosomes are present during exponential growth and decrease during stationary phase. This strain produces 30% fewer 100S ribosomes than strain N315 and RN4200 under the same growth conditions. This Staphylococcus aureus (strain USA300) protein is Ribosome hibernation promotion factor.